Consider the following 421-residue polypeptide: MEF2-activating motif and SAP domain-containing transcriptional regulator (421 aa).

Positions 12–28 match the MEF2-binding motif; the sequence is IIRSKFRSVLQLRIHRR. 3 disordered regions span residues 104-156, 188-296, and 322-406; these read PPEQ…PPSH, KAML…ASLT, and DQVE…ADLS. The region spanning 165–199 is the SAP domain; sequence LEELTVSELRQQLRLRGLPVSGTKAMLLERMRGGT. A compositionally biased stretch (basic and acidic residues) spans 191–214; it reads LLERMRGGTPPRERPKPRREDKEA. The tract at residues 208-421 is transcription activation; that stretch reads RREDKEAAAP…LLWELLPDPW (214 aa). Polar residues predominate over residues 230–241; it reads RLPSTVKASATN. Positions 260 to 292 are enriched in pro residues; that stretch reads ASVPAPTPSPALAPTPTPAPVPAPAPAPFPTPP. Positions 347–372 are enriched in low complexity; sequence SPDSEGFSSVFSSSLPSPTSSLSPSP.

Interacts with MEF2C. Expressed in skeletal muscle, brain, placenta and spleen.

It localises to the nucleus. Its function is as follows. Transcriptional coactivator. Stimulates the transcriptional activity of MEF2C. Stimulates MYOD1 activity in part via MEF2, resulting in an enhancement of skeletal muscle differentiation. This Mus musculus (Mouse) protein is MEF2-activating motif and SAP domain-containing transcriptional regulator (Mamstr).